Reading from the N-terminus, the 85-residue chain is uncharacterized protein (85 aa).

The residue at position 22 (Ser22) is a Phosphoserine.

It is found in the cytoplasm. It localises to the nucleus. This is an uncharacterized protein from Saccharomyces cerevisiae (strain ATCC 204508 / S288c) (Baker's yeast).